Consider the following 309-residue polypeptide: Transaldolase (309 aa).

K125 serves as the catalytic Schiff-base intermediate with substrate.

It belongs to the transaldolase family. Type 1 subfamily. As to quaternary structure, homodimer.

The protein resides in the cytoplasm. It carries out the reaction D-sedoheptulose 7-phosphate + D-glyceraldehyde 3-phosphate = D-erythrose 4-phosphate + beta-D-fructose 6-phosphate. The protein operates within carbohydrate degradation; pentose phosphate pathway; D-glyceraldehyde 3-phosphate and beta-D-fructose 6-phosphate from D-ribose 5-phosphate and D-xylulose 5-phosphate (non-oxidative stage): step 2/3. Transaldolase is important for the balance of metabolites in the pentose-phosphate pathway. This chain is Transaldolase, found in Pseudomonas syringae pv. tomato (strain ATCC BAA-871 / DC3000).